Reading from the N-terminus, the 473-residue chain is Reticulon-4 receptor (473 aa).

Residues 1-26 (MKRASSGGSRLLAWVLWLQAWRVATP) form the signal peptide. 2 disulfides stabilise this stretch: cysteine 27–cysteine 33 and cysteine 31–cysteine 43. The region spanning 27–57 (CPGACVCYNEPKVTTSCPQQGLQAVPTGIPA) is the LRRNT domain. LRR repeat units follow at residues 58 to 79 (SSQRIFLHGNRISHVPAASFQS), 82 to 103 (NLTILWLHSNALARIDAAAFTG), 106 to 128 (LLEQLDLSDNAQLHVVDPTTFHG), 131 to 152 (HLHTLHLDRCGLRELGPGLFRG), 155 to 176 (ALQYLYLQDNNLQALPDNTFRD), 179 to 200 (NLTHLFLHGNRIPSVPEHAFRG), 203 to 224 (SLDRLLLHQNHVARVHPHAFRD), and 227 to 248 (RLMTLYLFANNLSMLPAEVLMP). Asparagine 82 carries N-linked (GlcNAc...) asparagine glycosylation. A glycan (N-linked (GlcNAc...) asparagine) is linked at asparagine 179. Residues 260–311 (NPWVCDCRARPLWAWLQKFRGSSSEVPCNLPQRLADRDLKRLAASDLEGCAV) form the LRRCT domain. 3 cysteine pairs are disulfide-bonded: cysteine 264-cysteine 287, cysteine 266-cysteine 335, and cysteine 309-cysteine 336. Residues 346 to 446 (VLEPGRPASA…GASGTGDAEG (101 aa)) form a disordered region. An N-linked (GlcNAc...) asparagine glycan is attached at asparagine 372. Basic residues predominate over residues 413-429 (PRRRPGCSRKNRTRSHC). Residues 434-445 (AGSGASGTGDAE) are compositionally biased toward gly residues. Serine 447 carries the GPI-anchor amidated serine lipid modification. Residues 448–473 (GALPALACSLAPLGLALVLWTVLGPC) constitute a propeptide, removed in mature form.

The protein belongs to the Nogo receptor family. In terms of assembly, homodimer. Interacts with MAG. Interacts with RTN4. Interacts with NGFR. Interacts with LINGO1. Interacts with KIAA0319L. Interacts with OLFM1; this inhibits interaction with LINGO1 and NGFR. Interacts with OMG. In terms of processing, N-glycosylated. O-glycosylated. Contains terminal sialic acid groups on its glycan chains. Detected in embryonic hippocampus neurons. Detected in brain (at protein level). Detected in neurons in the neocortex, in hippocampus, dorsal thalamus, cerebellum granule cell layer and the mitral cell layer in the olfactory bulb. Detected in brain, dorsal root ganglion and heart.

It is found in the cell membrane. The protein resides in the membrane raft. Its subcellular location is the cell projection. The protein localises to the dendrite. It localises to the axon. It is found in the perikaryon. Its function is as follows. Receptor for RTN4, OMG and MAG. Functions as a receptor for the sialylated gangliosides GT1b and GM1. Besides, functions as a receptor for chondroitin sulfate proteoglycans. Can also bind heparin. Intracellular signaling cascades are triggered via the coreceptor NGFR. Signaling mediates activation of Rho and downstream reorganization of the actin cytoskeleton. Mediates axonal growth inhibition. Mediates axonal growth inhibition and plays a role in regulating axon regeneration and neuronal plasticity in the adult central nervous system. Plays a role in postnatal brain development. Required for normal axon migration across the brain midline and normal formation of the corpus callosum. Protects motoneurons against apoptosis; protection against apoptosis is probably mediated via interaction with MAG. Acts in conjunction with RTN4 and LINGO1 in regulating neuronal precursor cell motility during cortical development. Like other family members, plays a role in restricting the number dendritic spines and the number of synapses that are formed during brain development. This Mus musculus (Mouse) protein is Reticulon-4 receptor (Rtn4r).